We begin with the raw amino-acid sequence, 112 residues long: Cytochrome c6 (112 aa).

The first 25 residues, 1–25, serve as a signal peptide directing secretion; sequence MKTLLTILALTLVTLTTWLSTPAFA. Positions 39, 42, 43, and 83 each coordinate heme c.

Belongs to the cytochrome c family. PetJ subfamily. As to quaternary structure, monomer. Post-translationally, binds 1 heme c group covalently per subunit.

Its subcellular location is the cellular thylakoid lumen. Its function is as follows. Functions as an electron carrier between membrane-bound cytochrome b6-f and photosystem I in oxygenic photosynthesis. The sequence is that of Cytochrome c6 from Synechococcus sp. (strain ATCC 27167 / PCC 6312).